Here is a 386-residue protein sequence, read N- to C-terminus: Patatin-14 (386 aa).

A signal peptide spans 1–23 (MATTKSFLILFFMILATTSSTCA). The region spanning 32 to 229 (LSIDGGGIKG…TVGDPALLSL (198 aa)) is the PNPLA domain. A GXGXXG motif is present at residues 36–41 (GGGIKG). Residues 75-79 (GTSTG) carry the GXSXG motif. The active-site Nucleophile is the S77. N115 is a glycosylation site (N-linked (GlcNAc...) asparagine). The Proton acceptor role is filled by D215. Residues 215-217 (DGG) carry the DGA/G motif. Residues 321-381 (ENALTGTTTE…LLSDRKKLRA (61 aa)) adopt a coiled-coil conformation.

The protein belongs to the patatin family. In terms of tissue distribution, tuber.

It localises to the vacuole. Its function is as follows. Probable lipolytic acyl hydrolase (LAH), an activity which is thought to be involved in the response of tubers to pathogens. The polypeptide is Patatin-14 (Solanum tuberosum (Potato)).